The sequence spans 193 residues: Potassium-transporting ATPase KdpC subunit (193 aa).

Residues 14 to 34 (ITFTFLVLCGLVYPLIVTGIA) form a helical membrane-spanning segment.

Belongs to the KdpC family. In terms of assembly, the system is composed of three essential subunits: KdpA, KdpB and KdpC.

Its subcellular location is the cell membrane. In terms of biological role, part of the high-affinity ATP-driven potassium transport (or Kdp) system, which catalyzes the hydrolysis of ATP coupled with the electrogenic transport of potassium into the cytoplasm. This subunit acts as a catalytic chaperone that increases the ATP-binding affinity of the ATP-hydrolyzing subunit KdpB by the formation of a transient KdpB/KdpC/ATP ternary complex. This Bacillus cereus (strain Q1) protein is Potassium-transporting ATPase KdpC subunit.